Reading from the N-terminus, the 510-residue chain is uncharacterized protein (510 aa).

This sequence to B.subtilis SpoVR.

This is an uncharacterized protein from Escherichia coli (strain K12).